The sequence spans 217 residues: MEAIAKYDFKATADDELSFKRGDILKVLNEECDQNWYKAELNGKDGFIPKNYIEMKPHPWFFGKIPRAKAEEMLSKQRHDGAFLIRESESAPGDFSLSVKFGNDVQHFKVLRDGAGKYFLWVVKFNSLNELVDYHRSTSVSRNQQIFLRDIEQVPQQPTYVQALFDFDPQEDGELGFRRGDFIHVMDNSDPNWWKGACHGQTGMFPRNYVTPVNRNV.

An N-acetylmethionine modification is found at Met1. The region spanning 1-58 is the SH3 1 domain; sequence MEAIAKYDFKATADDELSFKRGDILKVLNEECDQNWYKAELNGKDGFIPKNYIEMKPH. N6-acetyllysine occurs at positions 6, 50, and 109. The region spanning 60 to 152 is the SH2 domain; the sequence is WFFGKIPRAK…NQQIFLRDIE (93 aa). Lys109 participates in a covalent cross-link: Glycyl lysine isopeptide (Lys-Gly) (interchain with G-Cter in ubiquitin). One can recognise an SH3 2 domain in the interval 156–215; the sequence is QQPTYVQALFDFDPQEDGELGFRRGDFIHVMDNSDPNWWKGACHGQTGMFPRNYVTPVNR. Phosphotyrosine is present on Tyr209. The residue at position 211 (Thr211) is a Phosphothreonine.

This sequence belongs to the GRB2/sem-5/DRK family. Homodimer. Associates (via SH2 domain) with activated EGF and PDGF receptors (tyrosine phosphorylated). Interacts with PDGFRA (tyrosine phosphorylated); the interaction may be indirect. Also associates to other cellular Tyr-phosphorylated proteins such as SIT1, IRS1, IRS2, IRS4, SHC and LNK; probably via the concerted action of both its SH2 and SH3 domains. It also seems to interact with RAS in the signaling pathway leading to DNA synthesis. Interacts with SOS1. Forms a complex with MUC1 and SOS1, through interaction of the SH3 domains with SOS1 and the SH2 domain with phosphorylated MUC1. Interacts with phosphorylated MET. Interacts with phosphorylated TOM1L1. Interacts with the phosphorylated C-terminus of SH2B2. Interacts with phosphorylated SIT1, LAX1, LAT, LAT2 and LIME1 upon TCR and/or BCR activation. Interacts with NISCH, PTPNS1 and REPS2. Interacts with syntrophin SNTA1. Interacts (via SH3 domains) with REPS1. Interacts (via SH3 domains) with PIK3C2B. Interacts with CBL and CBLB. Interacts with AJUBA and CLNK. Interacts (via SH2 domain) with TEK/TIE2 (tyrosine phosphorylated). Interacts with SHB, INPP5D/SHIP1, SKAP1 and SKAP2. Interacts with PTPN11. Interacts with PRNP. Interacts with RALGPS1. Interacts with HCST. Interacts with KDR. Interacts with FLT1 (tyrosine-phosphorylated). Interacts with GAPT and PTPRE. Interacts (via SH2 domain) with KIF26A. Interacts (via SH3 2) with GAB2. Interacts with ADAM15. Interacts with THEMIS2. Interacts (via SH2 domain) with AXL (phosphorylated). Interacts (via SH2 domain) with KIT (phosphorylated). Interacts with PTPRJ and BCR. Interacts with PTPN23. Interacts with FLT4 (tyrosine phosphorylated). Interacts with EPHB1 and SHC1; activates the MAPK/ERK cascade to regulate cell migration. Part of a complex including TNK2, GRB2, LTK and one receptor tyrosine kinase (RTK) such as AXL and PDGFRL, in which GRB2 promotes RTK recruitment by TNK2. Interacts (via SH2 domain) with CSF1R (tyrosine phosphorylated). Interacts with ERBB4. Interacts with NTRK1 (phosphorylated upon ligand-binding). Interacts with PTK2/FAK1 (tyrosine phosphorylated). Interacts with PTK2B/PYK2 (tyrosine phosphorylated). Interacts (via SH3 domains) with GAREM1 isoform 1 (via proline-rich domain and tyrosine phosphorylated); the interaction occurs upon EGF stimulation. Interacts with DAB2. Interacts with TESPA1. Interacts with PLCG1, LAT and THEMIS upon TCR activation in thymocytes; the association is weaker in the absence of TESPA1. Interacts with CD28. Interacts with RAB13; may recruit RAB13 to the leading edge of migrating endothelial cells where it can activate RHOA. Interacts with ASAP3 (phosphorylated form). Interacts (via SH2 domain) with PTPRH (phosphorylated form). Interacts with PTPRO (phosphorylated form). Interacts with PTPRB (phosphorylated form). Interacts (via SH3 domain 2) with PRR14 (via proline-rich region). Interacts with FCRL6 (tyrosine phosphorylated form). Interacts with RHEX (via tyrosine-phosphorylated form). Interacts with DENND2B. Interacts with SPRY2. Interacts with LRRC8A. Interacts with PEAK1. Interacts with CD28. Interacts with FCRL1. Interacts with PCNA. Interacts with CD19. Interacts with BECN1. Interacts with RAD51; the interaction inhibits RAD51 ATPase to stabilize RAD51-DNA complex at stalled replication forks. Interacts with MRE11; this interaction recruits MRE11 to the DNA damage sites. Interacts with RIPK1 ans SQSTM1; these interactions play a critical role in regulating programmed necrosis. Interacts with AGO2; this interaction is important for the formation of a ternary complex containing GRB2, AGO2 and DICER1. Interacts with TIGIT; this interaction inhibits PI3K and MAPK signaling cascades. Interacts with CD226; this interaction leads to activation of VAV1, PI3K and PLCG1. In terms of assembly, interacts (via SH2-domain) with SCIMP; this interaction is dependent on phosphorylation of SCIMP 'Tyr-69'. As to quaternary structure, interacts with SOS1; this interaction competes with GRB2 to bind SOS1 via its N-terminal SH3 domain. (Microbial infection) Interacts (via SH3 domain) with hepatitis E virus/HEV ORF3 protein. In terms of assembly, (Microbial infection) Interacts with hepatitis C virus/HCV protein NS5A via its SH3 domains. As to quaternary structure, (Microbial infection) Interacts with herpes simplex virus 1 protein UL46. (Microbial infection) Interacts with B19 parvovirus protein 11K. Post-translationally, phosphorylation of Tyr-209 in the C-terminal SH3 domain reduces its binding to SOS1. Ubiquitinated by RNF173, leading to proteasomal degradation and inhibition of the RAF/MEK/ERK pathway. In the nucleus, polyubiquitinated by RBBP6 at Lys-109 at DNA damage sites.

It localises to the nucleus. It is found in the cytoplasm. The protein localises to the endosome. The protein resides in the golgi apparatus. Non-enzymatic adapter protein that plays a pivotal role in precisely regulated signaling cascades from cell surface receptors to cellular responses, including signaling transduction and gene expression. Thus, participates in many biological processes including regulation of innate and adaptive immunity, autophagy, DNA repair or necroptosis. Controls signaling complexes at the T-cell antigen receptor to facilitate the activation, differentiation, and function of T-cells. Mechanistically, engagement of the TCR leads to phosphorylation of the adapter protein LAT, which serves as docking site for GRB2. In turn, GRB2 establishes a a connection with SOS1 that acts as a guanine nucleotide exchange factor and serves as a critical regulator of KRAS/RAF1 leading to MAPKs translocation to the nucleus and activation. Functions also a role in B-cell activation by amplifying Ca(2+) mobilization and activation of the ERK MAP kinase pathway upon recruitment to the phosphorylated B-cell antigen receptor (BCR). Plays a role in switching between autophagy and programmed necrosis upstream of EGFR by interacting with components of necrosomes including RIPK1 and with autophagy regulators SQSTM1 and BECN1. Regulates miRNA biogenesis by forming a functional ternary complex with AGO2 and DICER1. Functions in the replication stress response by protecting DNA at stalled replication forks from MRE11-mediated degradation. Mechanistically, inhibits RAD51 ATPase activity to stabilize RAD51 on stalled replication forks. Additionally, directly recruits and later releases MRE11 at DNA damage sites during the homology-directed repair (HDR) process. Functionally, does not bind to phosphorylated epidermal growth factor receptor (EGFR) but inhibits EGF-induced transactivation of a RAS-responsive element. Acts as a dominant negative protein over GRB2 and by suppressing proliferative signals, may trigger active programmed cell death. Mechanistically, inhibits RAS-ERK signaling and downstream cell proliferation by competing with GRB2 for SOS1 binding and thus by regulating SOS1 membrane recruitment. This Homo sapiens (Human) protein is Growth factor receptor-bound protein 2 (GRB2).